The primary structure comprises 74 residues: MQLFVRAQGLHTLEVTGQETVAQIKAHVASLEGISPEDQVVLLAGSPLEDEATLGQCGVEALTTLEVAGRMLGG.

It belongs to the ubiquitin family.

In terms of biological role, confers arsenite resistance. In Cricetulus griseus (Chinese hamster), this protein is Ubiquitin-like protein FUBI (FAU).